The primary structure comprises 281 residues: Apolipoprotein Eb (281 aa).

An N-terminal signal peptide occupies residues Met1 to Ala18. A propeptide spanning residues Arg19–Ala24 is cleaved from the precursor. Residues Met34–Asp66 are 3 X approximate tandem repeats. Repeat copies occupy residues Thr67–Thr88, Pro89–Gln110, Thr111–Glu132, Gln133–Asn154, Lys155–Ser176, Gln177–Gln199, Lys200–Lys227, Glu228–Thr249, and Pro254–Ala281. The interval Thr67–Ala281 is 9 X 22 AA approximate tandem repeats.

Belongs to the apolipoprotein A1/A4/E family. As to quaternary structure, homotetramer.

It is found in the secreted. The protein localises to the extracellular space. The protein resides in the extracellular matrix. APOE is an apolipoprotein, a protein associating with lipid particles, that mainly functions in lipoprotein-mediated lipid transport between organs via the plasma and interstitial fluids. APOE is a core component of plasma lipoproteins and is involved in their production, conversion and clearance. Apolipoproteins are amphipathic molecules that interact both with lipids of the lipoprotein particle core and the aqueous environment of the plasma. This is Apolipoprotein Eb (apoeb) from Danio rerio (Zebrafish).